The primary structure comprises 138 residues: Large ribosomal subunit protein uL16 (138 aa).

A compositionally biased stretch (basic residues) spans 1–13 (MLQPARRKYRKEQ). The segment at 1 to 20 (MLQPARRKYRKEQKGRNTGV) is disordered.

The protein belongs to the universal ribosomal protein uL16 family. As to quaternary structure, part of the 50S ribosomal subunit.

Its function is as follows. Binds 23S rRNA and is also seen to make contacts with the A and possibly P site tRNAs. The protein is Large ribosomal subunit protein uL16 of Verminephrobacter eiseniae (strain EF01-2).